Reading from the N-terminus, the 406-residue chain is Tyrosine-protein phosphatase non-receptor type 2 (406 aa).

The Tyrosine-protein phosphatase domain occupies 5–275 (IEREFEELDA…RFSYMAIIEG (271 aa)). Position 22 is a phosphotyrosine (Tyr-22). Ser-52 is subject to Phosphoserine. Position 68 is a phosphotyrosine (Tyr-68). Substrate contacts are provided by residues Asp-182, 216-222 (CSAGIGR), and Gln-260. The active-site Phosphocysteine intermediate is Cys-216. Position 216 is an S-nitrosocysteine (Cys-216). 5 positions are modified to phosphoserine: Ser-293, Ser-298, Ser-304, Ser-320, and Ser-339. The tract at residues 341 to 406 (ESILRKRIRE…ALVGWTLLFH (66 aa)) is endoplasmic reticulum location. A mediates interaction with STX17 region spans residues 371-406 (ERKRKRWLYWQPILTKMGFVSVILVGALVGWTLLFH).

The protein belongs to the protein-tyrosine phosphatase family. Non-receptor class 1 subfamily. In terms of assembly, interacts with RMDN3. Isoform 1 interacts with TMED9. Isoform 1 interacts with STX17; dephosphorylates STX17. Interacts with ITGA1 (via cytoplasmic domain); activates the phosphatase activity towards EGFR. Interacts with TRAF2; probably involved in tumor necrosis factor-mediated signaling. Interacts with MET. Interacts with FAM220A and STAT3; interaction with FAM220A promotes interaction of PTPN2 with transcriptional activator STAT3, leading to dephosphorylation of STAT3 by PTPN2 and negative regulation of STAT3 transcriptional activator activity. Specifically phosphorylated in a cell cycle-dependent manner by cyclin-dependent kinases CDK1 and CDK2. Probably activated through phosphorylation by PKR. Ubiquitously expressed. The highest expression levels were found in ovary, testis, thymus and kidney.

It is found in the endoplasmic reticulum. Its subcellular location is the endoplasmic reticulum-Golgi intermediate compartment. The protein resides in the nucleus. It localises to the cytoplasm. The protein localises to the cell membrane. The catalysed reaction is O-phospho-L-tyrosyl-[protein] + H2O = L-tyrosyl-[protein] + phosphate. Its function is as follows. Non-receptor type tyrosine-specific phosphatase that dephosphorylates receptor protein tyrosine kinases including INSR, EGFR, CSF1R, PDGFR. Also dephosphorylates non-receptor protein tyrosine kinases like JAK1, JAK2, JAK3, Src family kinases, STAT1, STAT3 and STAT6 either in the nucleus or the cytoplasm. Negatively regulates numerous signaling pathways and biological processes like hematopoiesis, inflammatory response, cell proliferation and differentiation, and glucose homeostasis. Plays a multifaceted and important role in the development of the immune system. Functions in T-cell receptor signaling through dephosphorylation of FYN and LCK to control T-cells differentiation and activation. Dephosphorylates CSF1R, negatively regulating its downstream signaling and macrophage differentiation. Negatively regulates cytokine (IL2/interleukin-2 and interferon)-mediated signaling through dephosphorylation of the cytoplasmic kinases JAK1, JAK3 and their substrate STAT1, that propagate signaling downstream of the cytokine receptors. Also regulates the IL6/interleukin-6 and IL4/interleukin-4 cytokine signaling through dephosphorylation of STAT3 and STAT6 respectively. In addition to the immune system, it is involved in anchorage-dependent, negative regulation of EGF-stimulated cell growth. Activated by the integrin ITGA1/ITGB1, it dephosphorylates EGFR and negatively regulates EGF signaling. Dephosphorylates PDGFRB and negatively regulates platelet-derived growth factor receptor-beta signaling pathway and therefore cell proliferation. Negatively regulates tumor necrosis factor-mediated signaling downstream via MAPK through SRC dephosphorylation. May also regulate the hepatocyte growth factor receptor signaling pathway through dephosphorylation of the hepatocyte growth factor receptor MET. Also plays an important role in glucose homeostasis. For instance, negatively regulates the insulin receptor signaling pathway through the dephosphorylation of INSR and control gluconeogenesis and liver glucose production through negative regulation of the IL6 signaling pathways. May also bind DNA. The chain is Tyrosine-protein phosphatase non-receptor type 2 (Ptpn2) from Mus musculus (Mouse).